The chain runs to 355 residues: Nuclear speckle splicing regulatory protein 1 homolog (355 aa).

The segment at 1–57 (MSGTGFRYGLNVMKKKKPNESSNRITFTEDDSSSSEQEHAPIPNSFSSQITAASDAS) is disordered. Polar residues predominate over residues 44–54 (NSFSSQITAAS). Positions 99-162 (MENLIESAKK…EDRKEEDEKS (64 aa)) form a coiled coil. 2 disordered regions span residues 253–292 (SANN…HGTY) and 325–355 (KIHA…ATNP). Residues 280-289 (YHQDRPDKRH) are compositionally biased toward basic and acidic residues. The stretch at 293–326 (SLEEIDKQRKEFENRQRLQKEKEFQKSREAALKI) forms a coiled coil. The segment covering 329 to 339 (SRNTTETQVQS) has biased composition (polar residues). Basic residues predominate over residues 346–355 (QRKKKAATNP).

Belongs to the NSRP1 family.

The protein is Nuclear speckle splicing regulatory protein 1 homolog of Schizosaccharomyces pombe (strain 972 / ATCC 24843) (Fission yeast).